The chain runs to 985 residues: P3N-PIPO polyprotein (985 aa).

The Peptidase S30 domain occupies 144–287; that stretch reads TFRDGHMNKF…MATVTHMEQY (144 aa). Active-site for P1 proteinase activity residues include His195, Asp204, and Ser238. The short motif at 337 to 340 is the Involved in interaction with stylet and aphid transmission element; it reads KLTC. The Involved in virions binding and aphid transmission motif lies at 595 to 597; it reads PTK. The 123-residue stretch at 621-743 folds into the Peptidase C6 domain; that stretch reads LYIALDGYCY…ESEIKHYRVG (123 aa). Active-site for helper component proteinase activity residues include Cys629 and His702.

This sequence belongs to the potyviridae P3N-PIPO polyprotein family. As to quaternary structure, interacts (via PIPO domain) with host PCaP1 protein; this interaction may help to anchor the movement complex to the plasma membrane from which the complex could move to the plasmodesmata. Post-translationally, potyviral RNA is expressed as two polyproteins which undergo post-translational proteolytic processing. Genome polyprotein is processed by NIa-pro, P1 and HC-pro proteinases resulting in the production of at least ten individual proteins. P3N-PIPO is cleaved by P1 and HC-pro proteinases resulting in the production of three individual proteins. The P1 proteinase and the HC-pro cleave only their respective C-termini autocatalytically.

It localises to the host cell junction. It is found in the host plasmodesma. It catalyses the reaction Hydrolyzes a Gly-|-Gly bond at its own C-terminus, commonly in the sequence -Tyr-Xaa-Val-Gly-|-Gly, in the processing of the potyviral polyprotein.. Functionally, required for aphid transmission and also has proteolytic activity. Only cleaves a Gly-Gly dipeptide at its own C-terminus. Interacts with virions and aphid stylets. Acts as a suppressor of RNA-mediated gene silencing, also known as post-transcriptional gene silencing (PTGS), a mechanism of plant viral defense that limits the accumulation of viral RNAs. May have RNA-binding activity. Its function is as follows. Allows efficient cell to cell propagation, by bypassing the host cell wall barrier. Transports viral genome to neighboring plant cells directly through plasmosdesmata, without any budding. The polypeptide is P3N-PIPO polyprotein (Pepper mottle virus (isolate California) (PeMV)).